The chain runs to 698 residues: Sucrose non-fermenting protein kinase 1 (698 aa).

A disordered region spans residues 1 to 48; it reads MAPRGFEDEELTISLSSSHVRRPQQQQPPPPTQQQHAHQPGSRPADAP. The Protein kinase domain occupies 62–313; the sequence is YKVLRTLGEG…IEDIRADPWF (252 aa). Residues 68 to 76 and Lys91 contribute to the ATP site; that span reads LGEGSFGKV. Catalysis depends on Asp184, which acts as the Proton acceptor. The interval 320-417 is auto-inhibitory domain (AID); it reads YLQLPVEEFF…ALLEPEGSSP (98 aa). Residues 360–397 enclose the UBA domain; it reads VTEKISKTMGYGKNDVEEALQASEPSAIKDAYMIVREN. Disordered regions lie at residues 410–435, 482–525, and 564–597; these read LEPE…TTTA, TRTD…KKTK, and ESRH…IDPM. The segment covering 415 to 435 has biased composition (low complexity); the sequence is SSPMLSMSSARSATSTTTTTA. Composition is skewed to basic and acidic residues over residues 484-493 and 564-573; these read TDAEKEETSR and ESRHAEERAE.

This sequence belongs to the protein kinase superfamily. CAMK Ser/Thr protein kinase family. SNF1 subfamily. Component of the AMP-activated protein kinase complex also known as the SNF1 kinase complex (Snf1c), a heterotrimeric complex composed of a catalytic subunit alpha and 2 regulatory subunits beta and gamma.

The protein resides in the cytoplasm. It localises to the nucleus. The enzyme catalyses L-seryl-[protein] + ATP = O-phospho-L-seryl-[protein] + ADP + H(+). It catalyses the reaction L-threonyl-[protein] + ATP = O-phospho-L-threonyl-[protein] + ADP + H(+). In terms of biological role, catalytic subunit of the AMP-activated protein kinase complex also known as the SNF1 kinase complex (Snf1c), a central regulator of cellular energy homeostasis, which, in response to a fall in intracellular ATP levels, activates energy-producing pathways and inhibits energy-consuming processes. The complex phosphorylates histone H3 to form H3S10ph, which promotes H3K14ac formation, leading to transcriptional activation through TBP recruitment to the promoters. Activates the expression of the galactose oxidase (GOA) gene and of several cell wall-degrading enzymes (CWDEs) such as pectate lyase, xylanase and glucanase. Plays an important role in sudden death syndrome (SDS) by controlling the colonization of the infected roots. The chain is Sucrose non-fermenting protein kinase 1 from Fusarium virguliforme.